The primary structure comprises 323 residues: Pyruvate dehydrogenase E1 component subunit beta (323 aa).

Glu60 provides a ligand contact to thiamine diphosphate. Positions 113, 161, 162, 164, and 166 each coordinate K(+).

Heterodimer of an alpha and a beta chain. Requires thiamine diphosphate as cofactor.

It localises to the plastid. It is found in the chloroplast. It carries out the reaction N(6)-[(R)-lipoyl]-L-lysyl-[protein] + pyruvate + H(+) = N(6)-[(R)-S(8)-acetyldihydrolipoyl]-L-lysyl-[protein] + CO2. In terms of biological role, the pyruvate dehydrogenase complex catalyzes the overall conversion of pyruvate to acetyl-CoA and CO(2). It contains multiple copies of three enzymatic components: pyruvate dehydrogenase (E1), dihydrolipoamide acetyltransferase (E2) and lipoamide dehydrogenase (E3). This is Pyruvate dehydrogenase E1 component subunit beta (pdhB) from Gracilaria tenuistipitata var. liui (Red alga).